Here is a 236-residue protein sequence, read N- to C-terminus: uncharacterized protein (236 aa).

Positions 217-236 (GESPDNVVRGEGGFGSTGGH) are disordered. Over residues 226–236 (GEGGFGSTGGH) the composition is skewed to gly residues.

This is an uncharacterized protein from Ostreid herpesvirus 1 (isolate France) (OsHV-1).